Reading from the N-terminus, the 253-residue chain is Tetraspanin-3 (253 aa).

At methionine 1–threonine 11 the chain is on the cytoplasmic side. A helical membrane pass occupies residues valine 12–alanine 32. The Extracellular portion of the chain corresponds to tyrosine 33–threonine 50. The chain crosses the membrane as a helical span at residues leucine 51 to glycine 71. Over cysteine 72–threonine 85 the chain is Cytoplasmic. Residues phenylalanine 86–valine 106 form a helical membrane-spanning segment. Residues tyrosine 107–valine 212 lie on the Extracellular side of the membrane. Asparagine 127, asparagine 152, asparagine 167, and asparagine 183 each carry an N-linked (GlcNAc...) asparagine glycan. The chain crosses the membrane as a helical span at residues isoleucine 213–valine 233. Residues leucine 234–alanine 253 are Cytoplasmic-facing.

Belongs to the tetraspanin (TM4SF) family. As to quaternary structure, interacts with claudin-11/CLDN11 and integrins.

The protein localises to the membrane. Regulates the proliferation and migration of oligodendrocytes, a process essential for normal myelination and repair. The polypeptide is Tetraspanin-3 (TSPAN3) (Homo sapiens (Human)).